The chain runs to 456 residues: Equilibrative nucleoside transporter 2 (456 aa).

The chain crosses the membrane as a helical span at residues 13 to 33; it reads LVGISFFILGLGTLLPWNFFI. N-linked (GlcNAc...) asparagine glycosylation occurs at asparagine 56. The next 5 membrane-spanning stretches (helical) occupy residues 69–89, 98–118, 123–143, 161–181, and 192–212; these read WVTLLSQLPLLLFTLLNSFLY, ILGSLLAILLLFALTAALVKV, GLFFSVTMASVWFINSFCAVL, LFLSGQGLAGIFAALAMLMSL, and LGYFITPCVGILLSIVCYLSL. Residues 248–277 are disordered; the sequence is GVPISPQQASPTLDLDPEKEPEPEEPQKPG. A Phosphoserine modification is found at serine 252. Residues 263–275 are compositionally biased toward basic and acidic residues; that stretch reads DPEKEPEPEEPQK. 5 helical membrane-spanning segments follow: residues 288–308, 323–343, 360–380, 396–416, and 432–452; these read IWLTALCLVLVFTVTLSVFPA, WGLFFNPICCFLLFNVMDWLG, LLPLLVCLRFLFVPLFMLCHV, FITFMLLFAVSNGYLVSLTMC, and ALMTFFLALGLSCGASLSFLF.

Belongs to the SLC29A/ENT transporter (TC 2.A.57) family.

It localises to the apical cell membrane. The protein localises to the basolateral cell membrane. It is found in the nucleus membrane. It carries out the reaction inosine(in) = inosine(out). The catalysed reaction is adenosine(in) = adenosine(out). It catalyses the reaction uridine(out) = uridine(in). The enzyme catalyses thymidine(in) = thymidine(out). It carries out the reaction hypoxanthine(out) = hypoxanthine(in). The catalysed reaction is adenine(out) = adenine(in). It catalyses the reaction cytidine(in) = cytidine(out). The enzyme catalyses thymine(out) = thymine(in). It carries out the reaction uracil(in) = uracil(out). The catalysed reaction is guanine(out) = guanine(in). It catalyses the reaction guanosine(in) = guanosine(out). Bidirectional uniporter involved in the facilitative transport of nucleosides and nucleobases, and contributes to maintaining their cellular homeostasis. Functions as a Na(+)-independent, passive transporter. Involved in the transport of nucleosides such as inosine, adenosine, uridine, thymidine, cytidine and guanosine. Also able to transport purine nucleobases (hypoxanthine, adenine, guanine) and pyrimidine nucleobases (thymine, uracil). Involved in nucleoside transport at basolateral membrane of kidney cells, allowing liver absorption of nucleoside metabolites. Mediates apical nucleoside uptake into Sertoli cells, thereby regulating the transport of nucleosides in testis across the blood-testis-barrier. Mediates both the influx and efflux of hypoxanthine in skeletal muscle microvascular endothelial cells to control the amount of intracellular hypoxanthine available for xanthine oxidase-mediated ROS production. This is Equilibrative nucleoside transporter 2 from Mus musculus (Mouse).